A 18562-amino-acid chain; its full sequence is Titin homolog (18562 aa).

An Ig-like 1 domain is found at 90–176 (PKFIQVIKAY…GVSTSYGYIT (87 aa)). Residues 384-404 (RFHPQPPKPPRAGTSRRFLPE) form a disordered region. Ig-like domains are found at residues 406–493 (PKFV…TQVT), 821–913 (PKIV…AFIN), 943–1038 (PKFI…LTIS), and 1135–1225 (PRFE…LTVD). An intrachain disulfide couples C842 to C897. The segment at 1336-1360 (LPPVQKSMSVQEEKASSQRTPSPMN) is disordered. Residues 1679 to 1762 (PKFLRKLVNC…ASNVAGTTFS (84 aa)) form the Ig-like 6 domain. An intrachain disulfide couples C1700 to C1751. Coiled coils occupy residues 1766–1786 (LKLS…SEIK), 2011–2038 (QSLD…ERTS), and 2065–2085 (ISDQ…ALQE). The segment at 2155–2177 (RKGSDKDKRKATRIKRVPSAHSA) is disordered. Residues 2163–2172 (RKATRIKRVP) are compositionally biased toward basic residues. Positions 2205-2231 (LKQNEEAKEIQELFVKIEKEINTIAEL) form a coiled coil. 2 disordered regions span residues 2298-2459 (IIGI…TADA) and 2614-2637 (KSSL…EVTA). Over residues 2309 to 2323 (RRPSSTPRGSTRSSN) the composition is skewed to low complexity. The span at 2324-2341 (LTTSQDSQATTKMTVSSE) shows a compositional bias: polar residues. A coiled-coil region spans residues 2606–2630 (LMQTLASEKSSLKAAEEDEKEGEEE). Positions 2621–2636 (EEDEKEGEEEGEEEVT) are enriched in acidic residues. Ig-like domains lie at 3095 to 3177 (KEVM…SGLY) and 3179 to 3264 (TERS…SFVS). The tract at residues 3362–3692 (EVPKVAEPSE…NAEAQKVVDS (331 aa)) is disordered. A compositionally biased stretch (acidic residues) spans 3655–3665 (SEEETPLEETN). Ig-like domains are found at residues 3789–3878 (PVFT…CEIV), 3897–3985 (PHFV…CTID), and 4038–4125 (PPYF…CVLT). Intrachain disulfides connect C3919–C3969 and C4059–C4109. Disordered regions lie at residues 4553-4599 (QSRE…SAPT), 4634-4699 (TVEP…EIVE), 4750-4814 (GSTA…TSEV), 4826-4855 (PVPE…EVQP), 4912-4931 (STAA…VESK), 4950-4969 (PETS…PVES), 4989-5216 (PETS…EILE), 5267-5294 (GSTA…EVEP), 5306-5325 (PETS…SVES), 5345-5372 (PETS…EVEP), 5428-6101 (GSTA…VEPT), 6127-6157 (VQVP…EVQP), 6214-6900 (STAA…ETSE), and 6930-8453 (APVE…DDKL). A compositionally biased stretch (basic and acidic residues) spans 4555–4577 (RELDNTERNFTVNKEKDESKKPS). PVET repeat units lie at residues 4599–4626 (TVEK…KDVP), 4627–4665 (VPET…KDVP), 4666–4704 (VPET…KDVT), 4755–4787 (PAQE…KDVP), 4788–4826 (VPET…KDVP), 4827–4865 (VPET…KDVT), 4917–4948 (AQEP…KDVP), 4949–4987 (VPET…KDVP), 4988–5026 (VPET…KDVP), 5027–5065 (VPET…KDVP), 5066–5104 (VPET…KDVP), 5105–5143 (VPET…KDVP), 5144–5182 (VPET…KVVP), 5183–5221 (VPET…KDVT), 5273–5304 (AQEP…KDVP), 5305–5343 (VPET…KDVP), 5344–5382 (VPET…KDVT), 5434–5465 (AQEP…KDVP), 5466–5504 (VPET…KDVP), 5505–5543 (VPET…KVVP), 5544–5582 (VPET…KDVP), 5583–5621 (VPET…KDVP), 5622–5660 (VPET…KDVS), 5661–5699 (VPET…KDVS), 5700–5738 (VPET…KDVP), 5739–5777 (VPET…KDVQ), 5778–5816 (VPET…KDVP), 5817–5855 (VPET…KDVP), 5856–5894 (VPET…KDVS), 5895–5933 (VPET…KDVP), 5934–5972 (VPET…KDVQ), 5973–6011 (VPET…KDVP), 6012–6050 (VPET…KDVQ), 6051–6089 (VPET…KDVS), 6090–6128 (VPET…KDVQ), 6129–6167 (VPET…KDVT), 6219–6250 (AHEP…KDVP), 6251–6289 (VPET…KDLP), 6290–6328 (VPET…KDVP), 6329–6367 (VPET…KDVP), 6368–6406 (VPET…KDVP), 6407–6445 (VPET…KDVS), 6446–6484 (VPET…KDVS), 6485–6523 (VPET…KDVP), 6524–6562 (VPET…KDVQ), 6563–6601 (VPET…KDVP), 6602–6640 (VPET…KDVP), 6641–6679 (VPET…KDVQ), 6680–6718 (VPET…KDVP), 6719–6757 (VPET…KDVA), 6758–6796 (VPET…KDVP), 6797–6835 (VPET…KDVP), 6836–6874 (VPET…KDVP), 6875–6913 (VPET…KDVP), 6914–6952 (VPEA…KDVP), and 6953–6991 (VPEA…KLKK). 2 stretches are compositionally biased toward basic and acidic residues: residues 4638–4651 (TVEK…KETS) and 4677–4691 (TVEK…EKSE). Basic and acidic residues predominate over residues 4960–4969 (TVEKLKPVES). Residues 5038 to 5051 (TVEKLKPVESKETS) are compositionally biased toward basic and acidic residues. Basic and acidic residues-rich tracts occupy residues 5116-5129 (TVEK…KETS) and 5155-5168 (TVEK…KETS). A coiled-coil region spans residues 5212-5235 (AEILEQKDVTCEEEIKELLTEVEV). Over residues 5316-5325 (TVEKLKSVES) the composition is skewed to basic and acidic residues. 2 stretches are compositionally biased toward basic and acidic residues: residues 5477-5490 (TVEK…KETS) and 5516-5529 (TVEK…KETS). Composition is skewed to basic and acidic residues over residues 6690–6704 (PTKE…KETS), 6729–6743 (PTKE…KETS), 6768–6782 (PTKE…KETS), 6807–6821 (PTKE…KETS), 6846–6860 (PTKE…KETS), and 6885–6899 (PTKE…KETS). 4 stretches are compositionally biased toward basic and acidic residues: residues 6972 to 7606 (ESKE…DNFK), 7613 to 7630 (LQKE…DNFK), 7637 to 8062 (LQKE…DNFK), and 8069 to 8453 (LQKE…DDKL). Positions 6984 to 7812 (QADAKLKKEK…DKLKQETDAK (829 aa)) form a coiled coil. 96 BLUE repeats span residues 6992-6996 (EKDDK), 6997-7012 (HKQE…NDDK), 7013-7028 (LKQE…NDDK), 7029-7044 (LKQE…NDDK), 7045-7060 (LKQE…NDDK), 7061-7076 (LKQE…NDDK), 7077-7092 (LKQE…NDDK), 7093-7108 (LKQE…NDDK), 7109-7124 (LKQE…NDDK), 7125-7140 (LKQE…NDDK), 7141-7156 (LKQE…NDDK), 7157-7172 (LKQE…NDDK), 7173-7188 (LKQE…NDDK), 7189-7204 (LKQE…KHDK), 7205-7220 (LKQE…NDDK), 7221-7236 (LKQE…NDDK), 7237-7252 (LKQE…KDDK), 7253-7268 (LKQE…KDDK), 7269-7284 (LKQD…KDDK), 7285-7300 (LKQE…KDDK), 7301-7316 (LKHE…KDDK), 7317-7332 (LKQE…KDDR), 7333-7348 (LKKD…KDDK), 7349-7364 (LKQE…KDDK), 7365-7380 (LKHE…KDDK), 7381-7396 (LKQE…KDDK), 7397-7412 (LKQE…KDDK), 7413-7428 (LKQE…KDDK), 7429-7444 (LKQE…KDDK), 7445-7460 (LKQE…KDDK), 7461-7476 (LKQE…KDDK), 7477-7492 (LKQE…KDDK), 7493-7508 (LKQE…KDDK), 7509-7524 (LKQD…KDDK), 7525-7540 (LKQE…KDDK), 7541-7556 (LKHE…KDDK), 7557-7572 (LKQE…KDDK), 7573-7588 (LKQD…KDDK), 7589-7604 (LKHE…KDDN), 7605-7620 (FKQE…KDDK), 7621-7628 (LKQEKDDN), 7629-7644 (FKQE…KDDK), 7645-7652 (LKQEKDDK), 7653-7668 (LKQE…KDDK), 7669-7684 (LKQE…KDDK), 7685-7700 (LKQE…KDDK), 7701-7716 (LKQE…KDDK), 7717-7732 (LKQE…KDDK), 7733-7748 (LKQE…KDDK), 7749-7764 (LKQE…KDDK), 7765-7772 (LKQEKNDK), 7773-7788 (LKQE…KDDK), 7789-7804 (LKQE…KDDK), 7805-7820 (LKQE…KDDK), 7821-7836 (LKQE…KDDK), 7837-7852 (LKQE…KDDK), 7853-7868 (LKQE…KDNK), 7869-7884 (LKQE…KDNK), 7885-7900 (LKQE…KDDK), 7901-7916 (LKQE…KDDK), 7917-7932 (LKQE…KDDK), 7933-7948 (LKQE…KDDK), 7949-7964 (LKQE…KDDK), 7965-7980 (LKQE…KDDK), 7981-7996 (LKQE…KDDK), 7997-8012 (LKQE…KDDK), 8013-8028 (LKQE…KDDK), 8029-8044 (LKQE…KDDK), 8045-8060 (LKQE…KDDN), 8061-8076 (FKQE…KDDK), 8077-8084 (LKQEKDDK), 8085-8100 (LKQE…KDDK), 8101-8116 (LKQE…KDDK), 8117-8132 (LKQE…KDDK), 8133-8148 (LKQE…KDDK), 8149-8164 (LKQE…KDDK), 8165-8180 (LKQE…KDDK), 8181-8196 (LKQE…KDDK), 8197-8212 (LKQE…KDDK), 8213-8228 (LKQE…KDDK), 8229-8244 (LKQE…KDDK), 8245-8260 (LKQE…KDDK), 8261-8276 (LKQE…KDDK), 8277-8292 (LKQE…KDDK), 8293-8308 (LKQE…KDNK), 8309-8324 (LKQE…KDNK), 8325-8340 (LKQE…KDDK), 8341-8356 (LKQE…KDDK), 8357-8371 (LKQE…EKDD), 8373-8388 (LKQE…KDDK), 8389-8404 (LKQE…KDDK), 8405-8420 (LKQE…KDDK), 8421-8436 (LKQE…KDDK), 8437-8452 (LKQE…KDDK), 8453-8468 (LKQE…KDDK), and 8469-8484 (LKQE…KGDK). Residues 7876–8273 (KLKKEKDNKL…EADAKLKKDK (398 aa)) are a coiled coil. A coiled-coil region spans residues 8316–8490 (KLKKEKDNKL…KGDKLKLEDQ (175 aa)). Residues 8599–8611 (KHLKKKKKHHKKE) are compositionally biased toward basic residues. Residues 8599 to 8626 (KHLKKKKKHHKKEKIAVKETEQDEKTVS) are disordered. Residues 8612 to 8626 (KIAVKETEQDEKTVS) are compositionally biased toward basic and acidic residues. Residues 8950 to 9041 (KPRKAQLVAL…EIIEVNTLDY (92 aa)) enclose the Fibronectin type-III 1 domain. Disordered regions lie at residues 9079-9104 (IEEH…LDSE), 9147-9436 (VQKI…AAAE), 9481-9609 (EEQS…ETES), 9702-10224 (ADAV…ESRI), 10239-10274 (ESDD…EDSP), 10539-11018 (QSAP…DSFT), 11030-11111 (EDAV…QKDQ), 11123-11213 (KKLA…QDKT), 11225-11387 (AKTT…SLTS), 11420-11592 (KGLN…NPEL), 11624-11825 (LTKK…SDNL), 11872-11955 (LSAH…TSLS), 11996-12054 (TNLI…LQKN), 12397-12418 (GRRV…RKKR), 12537-12974 (EESR…PAES), 13026-13045 (EAAK…TEVV), 13065-13261 (AAEA…LNDK), 13283-13514 (QAQA…EQLK), 13553-13574 (EEKQ…KLKL), and 13594-13874 (EKLA…RRTG). A compositionally biased stretch (basic residues) spans 9084 to 9093 (KLKKKSKKSK). Basic and acidic residues-rich tracts occupy residues 9172-9184 (VKKD…KKSL) and 9191-9202 (TKKEIQGKPEKK). Residues 9213–9231 (SSISETSETLTKDLTQTKQ) are compositionally biased toward polar residues. The span at 9232–9267 (SEPEPAKRTTETSVQDEVKRKTETTSKSKQTTEEHP) shows a compositional bias: basic and acidic residues. Positions 9273–9283 (SDSSISSTSDA) are enriched in low complexity. A compositionally biased stretch (basic and acidic residues) spans 9295–9332 (EAQKVTEKPETAKLESKSKMTEDTTKESDNKETVDEKP). The span at 9346–9359 (STISETSETSAVES) shows a compositional bias: low complexity. Residues 9371–9510 (AAVDKEKKQK…QTKAKAAEKQ (140 aa)) adopt a coiled-coil conformation. 2 stretches are compositionally biased toward basic and acidic residues: residues 9373 to 9436 (VDKE…AAAE) and 9481 to 9521 (EEQS…KSNK). Over residues 9547–9558 (SSISQKSDTSKT) the composition is skewed to low complexity. Residues 9577–9749 (TSKQKETDKK…QTVEEQAKLD (173 aa)) adopt a coiled-coil conformation. Composition is skewed to basic and acidic residues over residues 9578-9609 (SKQK…ETES) and 9702-9783 (ADAV…DEKP). Residues 9798 to 9809 (SISQKSVTSKTV) show a composition bias toward polar residues. 3 stretches are compositionally biased toward basic and acidic residues: residues 9819-10004 (ETQK…DEKP), 10040-10149 (ETQK…KSEN), and 10162-10196 (VKSE…EPKE). Coiled coils occupy residues 9822–9995 (KVAD…TEEA) and 10046–10129 (EADK…TSKK). Over residues 10197 to 10206 (KKKIIKKKKD) the composition is skewed to basic residues. Basic and acidic residues predominate over residues 10207–10224 (TTKPQEASKELSSDESRI). The segment covering 10239-10250 (ESDDLSTASTIK) has biased composition (polar residues). One can recognise a Fibronectin type-III 2 domain in the interval 10461–10553 (KPTSLQVTST…DTIEATTQAE (93 aa)). Residues 10566–10609 (EKVKEPVSKKPENTKESEGHKKRDRKESEDHDENNLGKSGKDEF) are compositionally biased toward basic and acidic residues. Residues 10612–10637 (SGESGTSNQNEESAQLNTSFTSTEQH) are compositionally biased toward polar residues. The segment covering 10663 to 10680 (IDADVVEVEYDEQGDDIP) has biased composition (acidic residues). Positions 10707–10716 (MAEKDSDAME) are enriched in basic and acidic residues. Residues 10779–10790 (ADQTGMSIQDLN) are compositionally biased toward polar residues. Basic and acidic residues-rich tracts occupy residues 10840 to 10852 (QLDK…DDKM) and 10863 to 10884 (KKPE…KESD). The segment covering 10961 to 10975 (LSTSEQVENASQNLG) has biased composition (polar residues). Basic and acidic residues-rich tracts occupy residues 10999 to 11009 (IHGEAESKLGE), 11045 to 11055 (SAEKTSLEVRD), and 11076 to 11089 (SNRD…RDLN). Residues 11018–11064 (TLQDLYEELKAKEDAVEAGAETSNADQSAEKTSLEVRDMKKKMKKKQ) are a coiled coil. Positions 11090-11108 (TQHSNQTGEDESSTFNFGQ) are enriched in polar residues. Basic and acidic residues predominate over residues 11159–11173 (KKGEENEKTKFEAKH). The segment covering 11174 to 11187 (LGSSSASDSLAEST) has biased composition (low complexity). Basic and acidic residues-rich tracts occupy residues 11195 to 11211 (KGEV…KNQD), 11271 to 11280 (IPDKNRDSDK), and 11295 to 11318 (ESAE…EKTL). The span at 11374-11387 (SKVTTSFADESLTS) shows a compositional bias: polar residues. Basic and acidic residues-rich tracts occupy residues 11440–11464 (KVKD…KDQK) and 11472–11485 (GSKD…EEKT). A compositionally biased stretch (polar residues) spans 11503 to 11515 (MTDQKNVQESQYA). 3 stretches are compositionally biased toward basic and acidic residues: residues 11624–11635 (LTKKQDENDAKK), 11645–11669 (AKKD…DSRE), and 11722–11735 (VSEK…EKTV). The segment covering 11754–11767 (ESLNASSALSTTDV) has biased composition (polar residues). A compositionally biased stretch (basic and acidic residues) spans 11916-11937 (AEDKYVESRKKTTLKKKPEQKQ). Positions 12408-12428 (ELDDAKKRKKRRIKRVVERRN) form a coiled coil. Residues 12432-12547 (PRLTQLIPPR…ESRDDDKSVD (116 aa)) enclose the Ig-like 12 domain. 3 stretches are compositionally biased toward basic and acidic residues: residues 12537-12547 (EESRDDDKSVD), 12555-12567 (LEEK…DKSK), and 12609-12689 (VGAK…KKDA). A compositionally biased stretch (low complexity) spans 12690–12701 (SQPSSSKESSPP). Residues 12729-12740 (TMHSETNITTTI) show a composition bias toward polar residues. 3 stretches are compositionally biased toward basic and acidic residues: residues 12766–12839 (ESAK…KNKS), 12852–12865 (ETKK…EVPK), and 12889–12940 (PADD…DDKS). Residues 12797-12828 (KKSEKKDEVTAEKQSTEALIESKKKEVDESKI) are a coiled coil. Residues 12980–13103 (AEVNKAKKQK…LKLEEESAAK (124 aa)) adopt a coiled-coil conformation. Basic and acidic residues-rich tracts occupy residues 13065 to 13124 (AAEA…KAGE), 13133 to 13145 (PTSK…KDVG), 13176 to 13191 (TDSE…DEPT), 13203 to 13261 (EADK…LNDK), 13283 to 13327 (QAQA…EKQA), 13337 to 13354 (AVKK…EANK), and 13361 to 13416 (LKIE…DEKP). Positions 13237–13380 (LDAQEKIKKV…SKQTVEEQAK (144 aa)) form a coiled coil. A compositionally biased stretch (polar residues) spans 13431 to 13442 (SISQKSETSKTV). A compositionally biased stretch (basic and acidic residues) spans 13452-13514 (ETQKVADAAR…KQKEKDEQLK (63 aa)). The stretch at 13455-13628 (KVADAARKQK…ETKSKQTEEA (174 aa)) forms a coiled coil. Residues 13594–13637 (EKLAQEQSRLEDEAKKSAEKQKLESETKSKQTEEAPKESVDEKP) are compositionally biased toward basic and acidic residues. Over residues 13651–13662 (SSISQKSKSAKS) the composition is skewed to low complexity. Residues 13684–13696 (KVEQSPDESTSAT) show a composition bias toward polar residues. Basic and acidic residues predominate over residues 13697-13735 (IKRDPAQKTEEISKQDDGDEKKTTTDGKPPKPEDSEATP). Residues 13747–13760 (SDSVASDASLADVS) show a composition bias toward low complexity. Residues 13761–13770 (KLSDDVEEKP) show a composition bias toward basic and acidic residues. The span at 13784–13793 (SVISETSSVD) shows a compositional bias: polar residues. 2 stretches are compositionally biased toward basic and acidic residues: residues 13795–13808 (IKPE…EKAE) and 13824–13843 (SEPK…DMMT). Positions 13963-14036 (PVDFVKYLPR…RAKYEDSGKY (74 aa)) constitute an Ig-like 13 domain. 3 Fibronectin type-III domains span residues 14153-14247 (APGD…TGSP), 14253-14348 (VEFP…TVEG), and 14350-14448 (VPEI…VLAD). Ig-like domains lie at 14451 to 14542 (PRVL…VGIS), 14550 to 14634 (SSFS…VIVN), and 14638 to 14727 (PHIL…LVFE). A disulfide bridge links C14568 with C14618. 2 Fibronectin type-III domains span residues 14826-14920 (APCD…TLES) and 14937-15027 (ILRT…LVPG). The interval 15011–15180 (VSSPSEETNP…TGKETTEKKK (170 aa)) is disordered. Composition is skewed to basic and acidic residues over residues 15034-15060 (KTEK…EKQV) and 15085-15117 (KVAE…ESRR). Residues 15118–15132 (GSLQASSDNESVTTT) are compositionally biased toward polar residues. Basic and acidic residues predominate over residues 15133–15177 (SEKRSEAELEKNSEKSAEKKSTSADLEAADKAETEKSETGKETTE). 2 Ig-like domains span residues 15180–15274 (KKVV…VSIA) and 15283–15371 (PKVE…IALR). Fibronectin type-III domains follow at residues 15383-15475 (PTGP…LKKK) and 15503-15596 (QIGK…TTES). The segment at 15470-15503 (TTLKKKEETGKQKSEKSESDEKKSESDKVSELKQ) is disordered. Basic and acidic residues predominate over residues 15473–15503 (KKKEETGKQKSEKSESDEKKSESDKVSELKQ). 2 consecutive Ig-like domains span residues 15599–15687 (PAFT…CKLT) and 15692–15786 (PEIN…IQVT). The Fibronectin type-III 10 domain maps to 15791 to 15883 (APGKPAVEDQ…DESELVVVKN (93 aa)). The Protein kinase domain maps to 15934-16189 (YIIHEELGKG…VQDALRHPWI (256 aa)). ATP contacts are provided by residues 15940 to 15948 (LGKGAYGTV) and K15963. D16055 functions as the Proton acceptor in the catalytic mechanism. The autoinhibitory domain stretch occupies residues 16206 to 16264 (KMQPKLDKSGVPARQKRNFLSLKRWSDDLLPIGRLAKRGAIFRRLTMDGVFERNIAFDT). Ig-like domains lie at 16268–16358 (PSVK…AKLS), 16500–16575 (GKQL…VAKN), 16605–16692 (PRFR…FSVV), and 16705–16789 (PKFL…KDFT). 4 disulfides stabilise this stretch: C16290–C16342, C16508–C16571, C16627–C16677, and C16726–C16778. Positions 16805 to 16827 (LTPVRSRSRSRSRSPSVVGGEIQ) are disordered. 3 consecutive Ig-like domains span residues 16829–16918 (PPVV…AIVV), 16932–17025 (PTFV…LTIS), and 17037–17126 (PYFI…TEVS). The segment at 17121 to 17169 (QNTEVSVTKSKEVKEKKEKKKVEKKDEGKKKPGRPGLPRPSGASKTEQV) is disordered. Residues 17129 to 17150 (KSKEVKEKKEKKKVEKKDEGKK) are compositionally biased toward basic and acidic residues. The region spanning 17154–17245 (RPGLPRPSGA…MTSTLKTASV (92 aa)) is the Fibronectin type-III 11 domain. 11 Ig-like domains span residues 17249-17336 (PQFT…CQVT), 17358-17447 (PTLQ…CNVA), 17457-17548 (PSFS…VMIA), 17570-17661 (PRFT…TQVI), 17676-17765 (PKFT…QATT), 17782-17873 (PRFV…LNVS), 18008-18097 (PKFM…SEID), 18121-18213 (PNFI…LQVS), 18224-18316 (PPLF…MQLD), 18329-18417 (PRVF…LELT), and 18429-18519 (PKFN…MILS). Cystine bridges form between C17379–C17431 and C17478–C17530. C17697 and C17754 are joined by a disulfide. An intrachain disulfide couples C18143 to C18195.

The protein belongs to the protein kinase superfamily. CAMK Ser/Thr protein kinase family. Interacts (via C-terminus) with myosin. Interacts with actin. Mg(2+) is required as a cofactor. In terms of tissue distribution, expression is restricted to body wall, enteric and vulval muscles.

The protein localises to the cytoplasm. It is found in the myofibril. The protein resides in the sarcomere. It localises to the a band. Its subcellular location is the i band. The protein localises to the nucleus membrane. It carries out the reaction L-seryl-[protein] + ATP = O-phospho-L-seryl-[protein] + ADP + H(+). It catalyses the reaction L-threonyl-[protein] + ATP = O-phospho-L-threonyl-[protein] + ADP + H(+). Functionally, serine/threonine-protein kinase. Key component in the assembly and functioning of muscles. By providing connections at the level of individual microfilaments, it contributes to the fine balance of forces between the two halves of the sarcomere. The size and extensibility of the cross-links are the main determinants of sarcomere extensibility properties of muscle. In non-muscle cells, seems to play a role in chromosome condensation and chromosome segregation during mitosis. Might link the lamina network to chromatin or nuclear actin, or both during interphase. This chain is Titin homolog, found in Caenorhabditis elegans.